The primary structure comprises 98 residues: Defensin-B (98 aa).

The N-terminal stretch at 1–20 (MKSITVICFLALCTVAITSA) is a signal peptide. Positions 21 to 58 (YPQEPVLADEARPFANSLFDELPEETYQAAVENFRLKR) are excised as a propeptide. 3 disulfide bridges follow: C61/C88, C74/C94, and C78/C96.

Belongs to the invertebrate defensin family. Type 1 subfamily.

It is found in the secreted. Functionally, antibacterial peptide mostly active against Gram-positive bacteria. This Aedes aegypti (Yellowfever mosquito) protein is Defensin-B (DEFB).